Reading from the N-terminus, the 122-residue chain is Allatotropin (122 aa).

The first 23 residues, 1–23, serve as a signal peptide directing secretion; it reads MRVILAITLLFVAGSFIATASKG. The propeptide occupies 24–40; sequence RNYPRFFKHRMKLREIR. Phe53 carries the post-translational modification Phenylalanine amide. The propeptide occupies 57–122; that stretch reads ESPAERIPDL…GDDSKKGTIA (66 aa).

Expressed in brain and ventral ganglia but not in the retrocerebral complex (at protein level).

The protein resides in the secreted. Functionally, neuropeptide stimulator of juvenile hormone synthesis. This chain is Allatotropin, found in Camponotus floridanus (Florida carpenter ant).